Reading from the N-terminus, the 240-residue chain is Tetrahydromethanopterin S-methyltransferase subunit A (240 aa).

The Cytoplasmic portion of the chain corresponds to 1-218; it reads MADKREPAPG…KFHSGVHAGK (218 aa). 5-hydroxybenzimidazolylcob(I)amide is bound at residue histidine 85. The chain crosses the membrane as a helical span at residues 219-239; that stretch reads VEGAMIGLTITISLLGLLLLG. A topological domain (extracellular) is located at residue arginine 240.

This sequence belongs to the MtrA family. In terms of assembly, the complex is composed of 8 subunits; MtrA, MtrB, MtrC, MtrD, MtrE, MtrF, MtrG and MtrH. Requires 5-hydroxybenzimidazolylcob(I)amide as cofactor.

It localises to the cell membrane. The enzyme catalyses 5-methyl-5,6,7,8-tetrahydromethanopterin + coenzyme M + 2 Na(+)(in) = 5,6,7,8-tetrahydromethanopterin + methyl-coenzyme M + 2 Na(+)(out). Its pathway is one-carbon metabolism; methanogenesis from CO(2); methyl-coenzyme M from 5,10-methylene-5,6,7,8-tetrahydromethanopterin: step 2/2. In terms of biological role, part of a complex that catalyzes the formation of methyl-coenzyme M and tetrahydromethanopterin from coenzyme M and methyl-tetrahydromethanopterin. This is an energy-conserving, sodium-ion translocating step. The polypeptide is Tetrahydromethanopterin S-methyltransferase subunit A (Methanosarcina mazei (strain ATCC BAA-159 / DSM 3647 / Goe1 / Go1 / JCM 11833 / OCM 88) (Methanosarcina frisia)).